The sequence spans 559 residues: Terpene synthase 1 (559 aa).

The Mg(2+) site is built by aspartate 312, aspartate 316, aspartate 456, and glutamate 464. The short motif at 312–316 (DDLYD) is the DDXXD motif element.

The protein belongs to the terpene synthase family. Tpsa subfamily. It depends on Mg(2+) as a cofactor. The cofactor is Mn(2+). As to expression, mostly expressed in stems and, to a lower extent, in leaves, roots and fruits.

The catalysed reaction is (2E,6E)-farnesyl diphosphate = (-)-(E)-beta-caryophyllene + diphosphate. It carries out the reaction (2E,6E)-farnesyl diphosphate = alpha-humulene + diphosphate. It functions in the pathway secondary metabolite biosynthesis; terpenoid biosynthesis. Functionally, sesquiterpene synthase involved in the biosynthesis of volatile compounds that contribute to the characteristic flavors of black pepper. Mediates the conversion of (2E,6E)-farnesyl diphosphate (FPP) into beta-caryophyllene and, as a minor compound, into alpha-humulene. In Piper nigrum (Black pepper), this protein is Terpene synthase 1.